Here is a 283-residue protein sequence, read N- to C-terminus: tRNA dimethylallyltransferase (283 aa).

The segment at 5-8 (DSML) is interaction with substrate tRNA.

This sequence belongs to the IPP transferase family. As to quaternary structure, monomer. Mg(2+) serves as cofactor.

The enzyme catalyses adenosine(37) in tRNA + dimethylallyl diphosphate = N(6)-dimethylallyladenosine(37) in tRNA + diphosphate. Catalyzes the transfer of a dimethylallyl group onto the adenine at position 37 in tRNAs that read codons beginning with uridine, leading to the formation of N6-(dimethylallyl)adenosine (i(6)A). This chain is tRNA dimethylallyltransferase, found in Desulforamulus reducens (strain ATCC BAA-1160 / DSM 100696 / MI-1) (Desulfotomaculum reducens).